A 1124-amino-acid chain; its full sequence is Phytochrome A (1124 aa).

Positions 1 to 19 (MSTTRPSQSSNNSGRSRNS) are enriched in low complexity. The interval 1 to 21 (MSTTRPSQSSNNSGRSRNSAR) is disordered. The GAF domain maps to 218–401 (SMERLCDTMV…VFAIHVNKEI (184 aa)). Cysteine 323 lines the phytochromobilin pocket. 2 consecutive PAS domains span residues 617–687 (VTSE…LQGE) and 750–821 (DYKA…VNFG). One can recognise a Histidine kinase domain in the interval 901 to 1120 (YMKRQIRNPL…ILSVELAAAH (220 aa)).

The protein belongs to the phytochrome family. Homodimer. In terms of processing, contains one covalently linked phytochromobilin chromophore.

Functionally, regulatory photoreceptor which exists in two forms that are reversibly interconvertible by light: the Pr form that absorbs maximally in the red region of the spectrum and the Pfr form that absorbs maximally in the far-red region. Photoconversion of Pr to Pfr induces an array of morphogenic responses, whereas reconversion of Pfr to Pr cancels the induction of those responses. Pfr controls the expression of a number of nuclear genes including those encoding the small subunit of ribulose-bisphosphate carboxylase, chlorophyll A/B binding protein, protochlorophyllide reductase, rRNA, etc. It also controls the expression of its own gene(s) in a negative feedback fashion. In Pisum sativum (Garden pea), this protein is Phytochrome A (PHYA).